Here is a 287-residue protein sequence, read N- to C-terminus: Nucleotide-binding protein Asuc_0930 (287 aa).

8-15 (GRSGAGKS) lines the ATP pocket. Residue 56–59 (DIRN) coordinates GTP.

This sequence belongs to the RapZ-like family.

Displays ATPase and GTPase activities. The sequence is that of Nucleotide-binding protein Asuc_0930 from Actinobacillus succinogenes (strain ATCC 55618 / DSM 22257 / CCUG 43843 / 130Z).